Here is a 338-residue protein sequence, read N- to C-terminus: Holliday junction branch migration complex subunit RuvB (338 aa).

The large ATPase domain (RuvB-L) stretch occupies residues 1 to 181; that stretch reads MERAITPEKR…FGVISRLEFY (181 aa). ATP contacts are provided by residues Leu20, Arg21, Gly62, Lys65, Thr66, Thr67, 128–130, Arg171, Tyr181, and Arg218; that span reads EDF. Residue Thr66 participates in Mg(2+) binding. A small ATPAse domain (RuvB-S) region spans residues 182 to 252; that stretch reads THDELAFIVT…VVQETLRLLE (71 aa). Residues 255–338 form a head domain (RuvB-H) region; it reads EMGFDQMDRM…TPERPQGSLF (84 aa). Arg310 and Arg315 together coordinate DNA.

The protein belongs to the RuvB family. Homohexamer. Forms an RuvA(8)-RuvB(12)-Holliday junction (HJ) complex. HJ DNA is sandwiched between 2 RuvA tetramers; dsDNA enters through RuvA and exits via RuvB. An RuvB hexamer assembles on each DNA strand where it exits the tetramer. Each RuvB hexamer is contacted by two RuvA subunits (via domain III) on 2 adjacent RuvB subunits; this complex drives branch migration. In the full resolvosome a probable DNA-RuvA(4)-RuvB(12)-RuvC(2) complex forms which resolves the HJ.

Its subcellular location is the cytoplasm. It carries out the reaction ATP + H2O = ADP + phosphate + H(+). Functionally, the RuvA-RuvB-RuvC complex processes Holliday junction (HJ) DNA during genetic recombination and DNA repair, while the RuvA-RuvB complex plays an important role in the rescue of blocked DNA replication forks via replication fork reversal (RFR). RuvA specifically binds to HJ cruciform DNA, conferring on it an open structure. The RuvB hexamer acts as an ATP-dependent pump, pulling dsDNA into and through the RuvAB complex. RuvB forms 2 homohexamers on either side of HJ DNA bound by 1 or 2 RuvA tetramers; 4 subunits per hexamer contact DNA at a time. Coordinated motions by a converter formed by DNA-disengaged RuvB subunits stimulates ATP hydrolysis and nucleotide exchange. Immobilization of the converter enables RuvB to convert the ATP-contained energy into a lever motion, pulling 2 nucleotides of DNA out of the RuvA tetramer per ATP hydrolyzed, thus driving DNA branch migration. The RuvB motors rotate together with the DNA substrate, which together with the progressing nucleotide cycle form the mechanistic basis for DNA recombination by continuous HJ branch migration. Branch migration allows RuvC to scan DNA until it finds its consensus sequence, where it cleaves and resolves cruciform DNA. The polypeptide is Holliday junction branch migration complex subunit RuvB (Trichlorobacter lovleyi (strain ATCC BAA-1151 / DSM 17278 / SZ) (Geobacter lovleyi)).